The chain runs to 234 residues: uncharacterized protein (234 aa).

Residues Met1–Ser23 are disordered.

This is an uncharacterized protein from Caenorhabditis elegans.